A 402-amino-acid polypeptide reads, in one-letter code: MSLEGIGFGYRERAPYASNPAFSRGRLVPEPESPTRTPFQRDRDRIIHSTAFRRLKHKTQVFIAHEGDHYRTRLTHTIEVAQIARALARALRLDEDLAEAVALVHDFGHTPFGHTGEDALNERMENFGGFDHNAQSLRIVTKLEHRYADFDGLNLSWETLEGLVKHNGPLLGPYAAHPDIPVPQPILDFNARYDLELSRFASLEAQCAAIADDIAYNAHDIDDGLRAGLLTLESLDEVPLAKRLLDIVRTRYPNLDPVRTGHELVRRQITIMVEDVIEEAQRRLASARPGTMEDVHNQPRALVGFSDAMRAEEKVLKRFLFKNLYFHESVVVRRHAADRIVQDLFDACFTDPSLMPDEWRLGCEALDKAALARRVADYLAGMTDNYAVREHRRLFDRTPDLA.

The disordered stretch occupies residues 20 to 39 (PAFSRGRLVPEPESPTRTPF). One can recognise an HD domain in the interval 73 to 217 (RLTHTIEVAQ…AAIADDIAYN (145 aa)).

Belongs to the dGTPase family. Type 2 subfamily.

This is Deoxyguanosinetriphosphate triphosphohydrolase-like protein from Brucella ovis (strain ATCC 25840 / 63/290 / NCTC 10512).